Here is a 351-residue protein sequence, read N- to C-terminus: Polycomb group RING finger protein 6 (351 aa).

The tract at residues 1-114 is disordered; it reads MEEAETDATE…FSLRLESGRA (114 aa). A compositionally biased stretch (basic and acidic residues) spans 9 to 19; that stretch reads TENKRASEAKR. Pro residues predominate over residues 24–37; sequence LPPPPPPISPPALI. S32 is modified (phosphoserine). Residues 38–51 show a composition bias toward low complexity; the sequence is PAPAAGEEGPASLA. Residues 62-80 show a composition bias toward basic and acidic residues; it reads RPPELEPERSLGRLRGRFE. Positions 69–110 form a coiled coil; the sequence is ERSLGRLRGRFEDYDEELEEDEEMEEEEEEEEEMSHFSLRLE. Residues 81 to 101 are compositionally biased toward acidic residues; the sequence is DYDEELEEDEEMEEEEEEEEE. S116 bears the Phosphoserine mark. The segment at 135–174 adopts an RING-type zinc-finger fold; sequence CSICKGYLIDATTITECLHTFCKSCIVRHFYYSNRCPKCN. Glycyl lysine isopeptide (Lys-Gly) (interchain with G-Cter in SUMO2) cross-links involve residues K224 and K235.

As to quaternary structure, component of a PRC1-like complex. Interacts with BMI1/PCGF4, RING1 and RNF2. Interacts with KDM5D. Interacts with CBX4, CBX6, CBX7 and CBX8. Post-translationally, phosphorylated during mitosis.

The protein resides in the nucleus. Functionally, transcriptional repressor. May modulate the levels of histone H3K4Me3 by activating KDM5D histone demethylase. Component of a Polycomb group (PcG) multiprotein PRC1-like complex, a complex class required to maintain the transcriptionally repressive state of many genes, including Hox genes, throughout development. PcG PRC1 complex acts via chromatin remodeling and modification of histones; it mediates monoubiquitination of histone H2A 'Lys-119', rendering chromatin heritably changed in its expressibility. Within the PRC1-like complex, regulates RNF2 ubiquitin ligase activity. This is Polycomb group RING finger protein 6 (Pcgf6) from Rattus norvegicus (Rat).